An 84-amino-acid chain; its full sequence is Small ribosomal subunit protein uS17 (84 aa).

The protein belongs to the universal ribosomal protein uS17 family. As to quaternary structure, part of the 30S ribosomal subunit.

Its function is as follows. One of the primary rRNA binding proteins, it binds specifically to the 5'-end of 16S ribosomal RNA. The sequence is that of Small ribosomal subunit protein uS17 from Clostridium perfringens (strain SM101 / Type A).